Here is a 55-residue protein sequence, read N- to C-terminus: Conotoxin vc5b (55 aa).

The signal sequence occupies residues 1–15 (VILLLLIASAPSVDA). A propeptide spanning residues 16-41 (QPKTKDDVPLAPLHDNAKSALQHLNQ) is cleaved from the precursor. At glutamine 53 the chain carries Glutamine amide.

Contains 2 disulfide bonds that can be either 'C1-C3, C2-C4' or 'C1-C4, C2-C3', since these disulfide connectivities have been observed for conotoxins with cysteine framework V (for examples, see AC P0DQQ7 and AC P81755). In terms of tissue distribution, expressed by the venom duct.

The protein localises to the secreted. The protein is Conotoxin vc5b of Conus victoriae (Queen Victoria cone).